Consider the following 275-residue polypeptide: RCYQRKDIHITDFYFLNTSGTGGGIENLSVGNQKLSLAIIQDGEDQNGAGYIADARLANIGLWEDASLEVALGINFSTESKNGKYDGDDGLLASGIIHQNMSNGFNQTVVQVGTAGYGIQMANFWGAGAYYDRSGDQNDASGYRVINWGVMNLGENWEMGHQLAYLAGSDLGTTKYDSSQYSIVARPMYKWNDTMRTIFEAGYNAGEVDDVDFGGAKFTVAQAWAMGDSFWARPEIRVYGSYLMDLENDSFGEVKNDTGVVTAAGTDNDFVVGIH.

The protein belongs to the porin LamB (TC 1.B.3) family. Homotrimer formed of three 18-stranded antiparallel beta-barrels, containing three independent channels.

It is found in the cell outer membrane. It catalyses the reaction beta-maltose(in) = beta-maltose(out). Its function is as follows. Involved in the transport of maltose and maltodextrins. This is Maltoporin (lamB) from Vibrio parahaemolyticus.